Here is a 536-residue protein sequence, read N- to C-terminus: B3 domain-containing protein Os03g0619800 (536 aa).

Residues 26-119 constitute a DNA-binding region (TF-B3 1); sequence MRCFLRRMAA…RYEVLILDSD (94 aa). Positions 138–199 are disordered; that stretch reads DKTVDPVDSS…VEPQTPSGSD (62 aa). Composition is skewed to low complexity over residues 145–160 and 171–183; these read DSSG…SSRS and SSSE…SPSG. Residues 231–330 constitute a DNA-binding region (TF-B3 2); it reads VAVMKKCNLQ…AFTVHLLQAE (100 aa). Residues 335–396 are disordered; that stretch reads RDGTDVHKIG…SDGPSEPPYI (62 aa). Polar residues predominate over residues 344 to 355; it reads GSSQNKRNSKMA. Residues 372 to 382 are compositionally biased toward basic and acidic residues; that stretch reads SNKHGVSHESL. The TF-B3 3 DNA-binding region spans 429-529; sequence ISKLAGSGGK…TMEVHIISNL (101 aa).

Its subcellular location is the nucleus. This chain is B3 domain-containing protein Os03g0619800, found in Oryza sativa subsp. japonica (Rice).